A 1039-amino-acid chain; its full sequence is Probable calcium-transporting ATPase 9, plasma membrane-type (1039 aa).

Residues 1 to 175 are Cytoplasmic-facing; sequence MEKLDRYLQE…FVWDALQDMT (175 aa). 2 helical membrane passes run 176–196 and 199–219; these read LIILMVCALLSVAVGLATEGW and GMYDGLGIILSIFLVVMVTAV. The Cytoplasmic segment spans residues 220–250; sequence SDYKQSLQFKELDNEKKKIFIHVTRDGRRQK. 2 helical membrane passes run 251–271 and 353–373; these read ISIYDLVVGDIVHLSIGDQVP and VATIIGKIGLVFAILTFLVLL. At 374–406 the chain is on the cytoplasmic side; it reads VRFLIDKGMTVGLLKWYSTDALTIVNYFATAVT. Residues 407 to 427 form a helical membrane-spanning segment; it reads IIVVAVPEGLPLAVTLSLAFA. Asp456 acts as the 4-aspartylphosphate intermediate in catalysis. Mg(2+)-binding residues include Asp758 and Asp762. Residues 825 to 845 traverse the membrane as a helical segment; it reads IVALVINFVSACIIGSAPLTA. The Cytoplasmic segment spans residues 846-847; the sequence is VQ. Helical transmembrane passes span 848 to 868 and 892 to 912; these read LLWVNMIMDTLGALALATEPP and NIMGQSLYQLFVLGALMFGGE. Over 913–960 the chain is Cytoplasmic; sequence RLLNIKGADSKSIINTLIFNSFVFCQVFNEINSREMQKINVFRGIISN. The next 2 helical transmembrane spans lie at 961-981 and 995-1015; these read WIFIAVIAATVAFQVVIIEFL and WLLSVGLGSISLIVGVILKCI. Topologically, residues 1016 to 1039 are cytoplasmic; it reads PVGSGETSATPNGYRPLANGPDDI.

Belongs to the cation transport ATPase (P-type) (TC 3.A.3) family. Type IIB subfamily.

The protein localises to the membrane. It catalyses the reaction Ca(2+)(in) + ATP + H2O = Ca(2+)(out) + ADP + phosphate + H(+). Its activity is regulated as follows. Activated by calmodulin. In terms of biological role, this magnesium-dependent enzyme catalyzes the hydrolysis of ATP coupled with the translocation of calcium from the cytosol out of the cell, into the endoplasmic reticulum, or into organelles. The polypeptide is Probable calcium-transporting ATPase 9, plasma membrane-type (Oryza sativa subsp. japonica (Rice)).